Reading from the N-terminus, the 401-residue chain is Rho-N domain-containing protein 1, chloroplastic (401 aa).

A chloroplast-targeting transit peptide spans 1 to 63 (MAMSGTFHLT…VPNRSSFVCR (63 aa)). Disordered regions lie at residues 73 to 129 (PDFS…PGPR) and 180 to 361 (KHSG…EEAV). Composition is skewed to polar residues over residues 102–126 (DMLS…TSSP), 210–223 (TGNL…DNNA), and 240–265 (PRSQ…VTWT). The segment covering 266–290 (QKKDTVELHDEPEHEPAYEHEHEPE) has biased composition (basic and acidic residues). Acidic residues predominate over residues 339 to 358 (LSDDDESLDDADEDSDEAEE). A coiled-coil region spans residues 339-371 (LSDDDESLDDADEDSDEAEEEAVKDLSELKLVE).

In terms of assembly, homodimer or homomultimer. Part of a chloroplastic degradosome-like complex. Interacts with RNE.

It localises to the plastid. It is found in the chloroplast. Binds to and supports processing of specific plastid RNAs. Associates via its C-terminal Rho-N domain to single stranded regions of 16S and 23S rRNAs or to rbcL mRNAs. May be involved in targeting transcripts to RNases such as RNE or RNase J. This chain is Rho-N domain-containing protein 1, chloroplastic (RHON1), found in Arabidopsis thaliana (Mouse-ear cress).